We begin with the raw amino-acid sequence, 213 residues long: Serine protease inhibitor 5 (213 aa).

Residues 1–22 form the signal peptide; sequence MKCLFLLCLCLVPIVVFSSTFT. A propeptide spanning residues 23 to 28 is cleaved from the precursor; the sequence is SQNPIN. A Vacuolar targeting signal motif is present at residues 25–30; it reads NPINLP. Cystine bridges form between C76–C125 and C174–C183.

Belongs to the protease inhibitor I3 (leguminous Kunitz-type inhibitor) family.

Its subcellular location is the vacuole. In terms of biological role, inhibitor of trypsin (serine protease). Protects the plant by inhibiting proteases of invading organisms. In Solanum tuberosum (Potato), this protein is Serine protease inhibitor 5.